Consider the following 191-residue polypeptide: Ribosome maturation factor RimM (191 aa).

One can recognise a PRC barrel domain in the interval 107–184 (EDDEWHQDDL…LVLVSPPPGL (78 aa)).

It belongs to the RimM family. In terms of assembly, binds ribosomal protein uS19.

Its subcellular location is the cytoplasm. In terms of biological role, an accessory protein needed during the final step in the assembly of 30S ribosomal subunit, possibly for assembly of the head region. Essential for efficient processing of 16S rRNA. May be needed both before and after RbfA during the maturation of 16S rRNA. It has affinity for free ribosomal 30S subunits but not for 70S ribosomes. In Kocuria rhizophila (strain ATCC 9341 / DSM 348 / NBRC 103217 / DC2201), this protein is Ribosome maturation factor RimM.